Reading from the N-terminus, the 250-residue chain is Glutathione transferase omega-1 (250 aa).

One can recognise a GST N-terminal domain in the interval 21-101 (SKGSFRVYNM…YLDDAFPETR (81 aa)). Residue cysteine 33 is the Nucleophile of the active site. Residues lysine 60 and 85–86 (ES) contribute to the glutathione site. The 129-residue stretch at 106 to 234 (DPYEKVQQKL…TQSLEHGAAF (129 aa)) folds into the GST C-terminal domain.

This sequence belongs to the GST superfamily. Omega family. In terms of assembly, homodimer. Expressed in the intestinal cells.

The protein localises to the cytoplasm. The catalysed reaction is RX + glutathione = an S-substituted glutathione + a halide anion + H(+). The enzyme catalyses L-dehydroascorbate + 2 glutathione = glutathione disulfide + L-ascorbate. It catalyses the reaction methylarsonate + 2 glutathione + H(+) = methylarsonous acid + glutathione disulfide + H2O. Its function is as follows. Exhibits glutathione-dependent thiol transferase activity. Has dehydroascorbate reductase activity and may contribute to the recycling of ascorbic acid. Participates in the biotransformation of inorganic arsenic and reduces monomethylarsonic acid (MMA). Protects against environmental stress and oxidative stress. The chain is Glutathione transferase omega-1 (gsto-1) from Caenorhabditis elegans.